The sequence spans 64 residues: Defensin beta 4A (64 aa).

An N-terminal signal peptide occupies residues 1-23 (MRVLYLLFSFLFIFLMPLPGVFG). 3 disulfide bridges follow: Cys-31–Cys-60, Cys-38–Cys-53, and Cys-43–Cys-61. The segment at 33–48 (KSGAICHPVFCPRRYK) is phosphatidylinositol 4,5-bisphosphate (PIP2) binding.

The protein belongs to the beta-defensin family. LAP/TAP subfamily. Monomer. Homodimer. In terms of tissue distribution, expressed in lung epithelial cells (at protein level). Expressed in foreskin, lung and trachea. Lower expression in kidney, uterus and salivary gland tissue. Expressed in epithelial cells of the respiratory tract, with higher expression in distal parenchyma of the lung, trachea, and tonsils, and lower expression in pharynx and adenoid, and low expression in tongue and larynx.

Its subcellular location is the secreted. Exhibits antimicrobial activity against Gram-negative bacteria and Gram-positive bacteria, with highest activity against Gram-negative bacteria. Antimicrobial activity against P.aruginosa seems to be salt-sensitive and is reduced with high salt concentrations greater than 25 mM. Also exhibits antimicrobial activity against the yeast C.albicans. Permeabilizes C.albicans cell membranes via targeting plasma membrane lipid phosphatidylinositol 4,5-bisphosphate (PIP2), thereby leading to cell fragmentation and cell death. Acts as a ligand for C-C chemokine receptor CCR6. Binds to CCR6 and induces chemotactic activity of CCR6-expressing cells, such as immature dendritic cells and memory T cells. The protein is Defensin beta 4A (DEFB4A) of Homo sapiens (Human).